A 274-amino-acid polypeptide reads, in one-letter code: Large ribosomal subunit protein uL2cz/uL2cy (274 aa).

Disordered stretches follow at residues 1–25 (MAIH…VKSN) and 224–274 (NPVD…RRSK).

It belongs to the universal ribosomal protein uL2 family. Part of the 50S ribosomal subunit.

The protein localises to the plastid. It is found in the chloroplast. The polypeptide is Large ribosomal subunit protein uL2cz/uL2cy (rpl2-A) (Aethionema cordifolium (Lebanon stonecress)).